The primary structure comprises 443 residues: Chromosome partition protein MukF (443 aa).

Residues 209 to 237 (LDETSGNLRELQDTLNAAGDKLQAQLLRI) are leucine-zipper.

Belongs to the MukF family. As to quaternary structure, interacts, and probably forms a ternary complex, with MukE and MukB via its C-terminal region. The complex formation is stimulated by calcium or magnesium. It is required for an interaction between MukE and MukB.

It localises to the cytoplasm. The protein resides in the nucleoid. Its function is as follows. Involved in chromosome condensation, segregation and cell cycle progression. May participate in facilitating chromosome segregation by condensation DNA from both sides of a centrally located replisome during cell division. Not required for mini-F plasmid partitioning. Probably acts via its interaction with MukB and MukE. Overexpression results in anucleate cells. It has a calcium binding activity. The polypeptide is Chromosome partition protein MukF (Actinobacillus pleuropneumoniae serotype 5b (strain L20)).